The sequence spans 146 residues: U1 small nuclear ribonucleoprotein C (146 aa).

The Matrin-type zinc-finger motif lies at 4–36; it reads YYCDYCDTYLTHDSPSVRKTHCTGRKHRDNVKF. A disordered region spans residues 64–96; the sequence is NNPFAGGPSSAPPKPSGVSIPPPNMGAPPRPGM. Pro residues predominate over residues 73–96; that stretch reads SAPPKPSGVSIPPPNMGAPPRPGM.

The protein belongs to the U1 small nuclear ribonucleoprotein C family. In terms of assembly, U1 snRNP is composed of the 7 core Sm proteins B/B', D1, D2, D3, E, F and G that assemble in a heptameric protein ring on the Sm site of the small nuclear RNA to form the core snRNP, and at least 3 U1 snRNP-specific proteins U1-70K, U1-A and U1-C. U1-C interacts with U1 snRNA and the 5' splice-site region of the pre-mRNA.

The protein localises to the nucleus. Functionally, component of the spliceosomal U1 snRNP, which is essential for recognition of the pre-mRNA 5' splice-site and the subsequent assembly of the spliceosome. U1-C is directly involved in initial 5' splice-site recognition for both constitutive and regulated alternative splicing. The interaction with the 5' splice-site seems to precede base-pairing between the pre-mRNA and the U1 snRNA. Stimulates commitment or early (E) complex formation by stabilizing the base pairing of the 5' end of the U1 snRNA and the 5' splice-site region. This Drosophila pseudoobscura pseudoobscura (Fruit fly) protein is U1 small nuclear ribonucleoprotein C.